The primary structure comprises 612 residues: MACPF domain-containing protein NSL1 (612 aa).

Positions 5 to 338 (NFTRLDAHSA…PPIEELHQFL (334 aa)) constitute an MACPF domain.

Belongs to the complement C6/C7/C8/C9 (TC 1.C.39) family.

Its function is as follows. Negatively controls the salicylic acid (SA)-mediated pathway of programmed cell death in plant immunity. The protein is MACPF domain-containing protein NSL1 (NSL1) of Arabidopsis thaliana (Mouse-ear cress).